Consider the following 127-residue polypeptide: Large ribosomal subunit protein eL8 (127 aa).

The protein belongs to the eukaryotic ribosomal protein eL8 family. As to quaternary structure, part of the 50S ribosomal subunit. Probably part of the RNase P complex.

The protein resides in the cytoplasm. In terms of biological role, multifunctional RNA-binding protein that recognizes the K-turn motif in ribosomal RNA, the RNA component of RNase P, box H/ACA, box C/D and box C'/D' sRNAs. The protein is Large ribosomal subunit protein eL8 of Saccharolobus islandicus (strain Y.N.15.51 / Yellowstone #2) (Sulfolobus islandicus).